Consider the following 666-residue polypeptide: tRNA 5-methylaminomethyl-2-thiouridine biosynthesis bifunctional protein MnmC (666 aa).

The segment at Met1 to Glu245 is tRNA (mnm(5)s(2)U34)-methyltransferase. Positions Ile270–Lys666 are FAD-dependent cmnm(5)s(2)U34 oxidoreductase.

The protein in the N-terminal section; belongs to the methyltransferase superfamily. tRNA (mnm(5)s(2)U34)-methyltransferase family. In the C-terminal section; belongs to the DAO family. The cofactor is FAD.

It is found in the cytoplasm. It carries out the reaction 5-aminomethyl-2-thiouridine(34) in tRNA + S-adenosyl-L-methionine = 5-methylaminomethyl-2-thiouridine(34) in tRNA + S-adenosyl-L-homocysteine + H(+). In terms of biological role, catalyzes the last two steps in the biosynthesis of 5-methylaminomethyl-2-thiouridine (mnm(5)s(2)U) at the wobble position (U34) in tRNA. Catalyzes the FAD-dependent demodification of cmnm(5)s(2)U34 to nm(5)s(2)U34, followed by the transfer of a methyl group from S-adenosyl-L-methionine to nm(5)s(2)U34, to form mnm(5)s(2)U34. In Salmonella choleraesuis (strain SC-B67), this protein is tRNA 5-methylaminomethyl-2-thiouridine biosynthesis bifunctional protein MnmC.